The sequence spans 382 residues: Dual-specificity RNA methyltransferase RlmN (382 aa).

The active-site Proton acceptor is Glu96. One can recognise a Radical SAM core domain in the interval 102-342 (QGKRGTLCVS…VRTTRGEDID (241 aa)). Cys109 and Cys345 are oxidised to a cystine. Positions 116, 120, and 123 each coordinate [4Fe-4S] cluster. S-adenosyl-L-methionine is bound by residues 170–171 (GE), Ser202, 224–226 (SLH), and Asn302. The active-site S-methylcysteine intermediate is the Cys345.

The protein belongs to the radical SAM superfamily. RlmN family. It depends on [4Fe-4S] cluster as a cofactor.

It localises to the cytoplasm. The enzyme catalyses adenosine(2503) in 23S rRNA + 2 reduced [2Fe-2S]-[ferredoxin] + 2 S-adenosyl-L-methionine = 2-methyladenosine(2503) in 23S rRNA + 5'-deoxyadenosine + L-methionine + 2 oxidized [2Fe-2S]-[ferredoxin] + S-adenosyl-L-homocysteine. It catalyses the reaction adenosine(37) in tRNA + 2 reduced [2Fe-2S]-[ferredoxin] + 2 S-adenosyl-L-methionine = 2-methyladenosine(37) in tRNA + 5'-deoxyadenosine + L-methionine + 2 oxidized [2Fe-2S]-[ferredoxin] + S-adenosyl-L-homocysteine. Its function is as follows. Specifically methylates position 2 of adenine 2503 in 23S rRNA and position 2 of adenine 37 in tRNAs. m2A2503 modification seems to play a crucial role in the proofreading step occurring at the peptidyl transferase center and thus would serve to optimize ribosomal fidelity. The polypeptide is Dual-specificity RNA methyltransferase RlmN (Pseudomonas fluorescens (strain ATCC BAA-477 / NRRL B-23932 / Pf-5)).